Consider the following 351-residue polypeptide: Photosystem II D2 protein (351 aa).

Residues 39-59 (TSYLSIGGWFTGTTFVTSWYT) form a helical membrane-spanning segment. Residue His-116 coordinates chlorophyll a. A helical transmembrane segment spans residues 123-139 (GFCLRQFEIARLVGIRP). Pheophytin a-binding residues include Gln-128 and Asn-141. The helical transmembrane segment at 151–164 (IFVSVFLMYPLGQA) threads the bilayer. A chlorophyll a-binding site is contributed by His-196. Residues 206–226 (AALLCAIHGATVQNTIFEDGD) form a helical membrane-spanning segment. 2 residues coordinate a plastoquinone: His-213 and Phe-260. His-213 provides a ligand contact to Fe cation. Residue His-267 participates in Fe cation binding. A helical membrane pass occupies residues 277 to 293 (GLWTSAIGIVGLALNLR).

It belongs to the reaction center PufL/M/PsbA/D family. PSII is composed of 1 copy each of membrane proteins PsbA, PsbB, PsbC, PsbD, PsbE, PsbF, PsbH, PsbI, PsbJ, PsbK, PsbL, PsbM, PsbT, PsbX, PsbY, PsbZ, Psb30/Ycf12, at least 3 peripheral proteins of the oxygen-evolving complex and a large number of cofactors. It forms dimeric complexes. The cofactor is The D1/D2 heterodimer binds P680, chlorophylls that are the primary electron donor of PSII, and subsequent electron acceptors. It shares a non-heme iron and each subunit binds pheophytin, quinone, additional chlorophylls, carotenoids and lipids. There is also a Cl(-1) ion associated with D1 and D2, which is required for oxygen evolution. The PSII complex binds additional chlorophylls, carotenoids and specific lipids..

The protein localises to the plastid. The protein resides in the chloroplast thylakoid membrane. It carries out the reaction 2 a plastoquinone + 4 hnu + 2 H2O = 2 a plastoquinol + O2. Functionally, photosystem II (PSII) is a light-driven water:plastoquinone oxidoreductase that uses light energy to abstract electrons from H(2)O, generating O(2) and a proton gradient subsequently used for ATP formation. It consists of a core antenna complex that captures photons, and an electron transfer chain that converts photonic excitation into a charge separation. The D1/D2 (PsbA/PsbD) reaction center heterodimer binds P680, the primary electron donor of PSII as well as several subsequent electron acceptors. D2 is needed for assembly of a stable PSII complex. This chain is Photosystem II D2 protein, found in Guillardia theta (Cryptophyte).